Reading from the N-terminus, the 593-residue chain is Aspartate--tRNA(Asp/Asn) ligase (593 aa).

Glu-175 serves as a coordination point for L-aspartate. Positions 199-202 (QQYK) are aspartate. Positions 221 and 452 each coordinate L-aspartate. 221–223 (RDE) is a binding site for ATP. Glu-486 contributes to the ATP binding site. An L-aspartate-binding site is contributed by Arg-493. Residue 538-541 (GVDR) coordinates ATP.

It belongs to the class-II aminoacyl-tRNA synthetase family. Type 1 subfamily. In terms of assembly, homodimer.

The protein localises to the cytoplasm. The enzyme catalyses tRNA(Asx) + L-aspartate + ATP = L-aspartyl-tRNA(Asx) + AMP + diphosphate. Its function is as follows. Aspartyl-tRNA synthetase with relaxed tRNA specificity since it is able to aspartylate not only its cognate tRNA(Asp) but also tRNA(Asn). Reaction proceeds in two steps: L-aspartate is first activated by ATP to form Asp-AMP and then transferred to the acceptor end of tRNA(Asp/Asn). The polypeptide is Aspartate--tRNA(Asp/Asn) ligase (Novosphingobium aromaticivorans (strain ATCC 700278 / DSM 12444 / CCUG 56034 / CIP 105152 / NBRC 16084 / F199)).